A 184-amino-acid chain; its full sequence is MNILEMDLGPLAPEHPIEIIVGVILVLLLTWLIAKAVVPRFEKLYEERTETIQGGIERAERAQAEAKAALEKYQAQLASARDEAAQIRDDAKSQGAQIIAEMRANAQEEADRITERANAQIQAERDQAVREVRAEIGGLATTLASRIVGESLQDDQRVQATVDRFLSSLADEPSASNSRTVNRA.

The helical transmembrane segment at 19-39 (IIVGVILVLLLTWLIAKAVVP) threads the bilayer.

Belongs to the ATPase B chain family. In terms of assembly, F-type ATPases have 2 components, F(1) - the catalytic core - and F(0) - the membrane proton channel. F(1) has five subunits: alpha(3), beta(3), gamma(1), delta(1), epsilon(1). F(0) has three main subunits: a(1), b(2) and c(10-14). The alpha and beta chains form an alternating ring which encloses part of the gamma chain. F(1) is attached to F(0) by a central stalk formed by the gamma and epsilon chains, while a peripheral stalk is formed by the delta and b chains.

Its subcellular location is the cell membrane. In terms of biological role, f(1)F(0) ATP synthase produces ATP from ADP in the presence of a proton or sodium gradient. F-type ATPases consist of two structural domains, F(1) containing the extramembraneous catalytic core and F(0) containing the membrane proton channel, linked together by a central stalk and a peripheral stalk. During catalysis, ATP synthesis in the catalytic domain of F(1) is coupled via a rotary mechanism of the central stalk subunits to proton translocation. Functionally, component of the F(0) channel, it forms part of the peripheral stalk, linking F(1) to F(0). In Cutibacterium acnes (strain DSM 16379 / KPA171202) (Propionibacterium acnes), this protein is ATP synthase subunit b.